Reading from the N-terminus, the 37-residue chain is Large ribosomal subunit protein bL36 (37 aa).

It belongs to the bacterial ribosomal protein bL36 family.

This Staphylococcus saprophyticus subsp. saprophyticus (strain ATCC 15305 / DSM 20229 / NCIMB 8711 / NCTC 7292 / S-41) protein is Large ribosomal subunit protein bL36.